The chain runs to 83 residues: Sulfur carrier protein TusA (83 aa).

Cysteine 20 acts as the Cysteine persulfide intermediate in catalysis.

It belongs to the sulfur carrier protein TusA family.

It localises to the cytoplasm. Functionally, sulfur carrier protein which probably makes part of a sulfur-relay system. In Pseudomonas fluorescens (strain SBW25), this protein is Sulfur carrier protein TusA.